The primary structure comprises 785 residues: LPS-assembly protein LptD (785 aa).

The signal sequence occupies residues 1–58; the sequence is MSCSCLCMSLYRGADRIGRFYTAHCPQDMALCMHRQKLNPLALALAAAFALNAPAALA.

It belongs to the LptD family. As to quaternary structure, component of the lipopolysaccharide transport and assembly complex. Interacts with LptE and LptA.

The protein localises to the cell outer membrane. In terms of biological role, together with LptE, is involved in the assembly of lipopolysaccharide (LPS) at the surface of the outer membrane. The chain is LPS-assembly protein LptD from Chromobacterium violaceum (strain ATCC 12472 / DSM 30191 / JCM 1249 / CCUG 213 / NBRC 12614 / NCIMB 9131 / NCTC 9757 / MK).